A 194-amino-acid polypeptide reads, in one-letter code: Acireductone dioxygenase 1 (194 aa).

The interval 1-21 (MEAWYMDDSADDQRKPHHRSP) is disordered. Fe(2+)-binding residues include His87, His89, Glu93, and His132. Ni(2+) is bound by residues His87, His89, Glu93, and His132.

This sequence belongs to the acireductone dioxygenase (ARD) family. It depends on Fe(2+) as a cofactor. Requires Ni(2+) as cofactor.

The protein resides in the cytoplasm. The protein localises to the nucleus. The catalysed reaction is 1,2-dihydroxy-5-(methylsulfanyl)pent-1-en-3-one + O2 = 4-methylsulfanyl-2-oxobutanoate + formate + 2 H(+). It carries out the reaction 1,2-dihydroxy-5-(methylsulfanyl)pent-1-en-3-one + O2 = 3-(methylsulfanyl)propanoate + CO + formate + 2 H(+). It functions in the pathway amino-acid biosynthesis; L-methionine biosynthesis via salvage pathway; L-methionine from S-methyl-5-thio-alpha-D-ribose 1-phosphate: step 5/6. Functionally, catalyzes 2 different reactions between oxygen and the acireductone 1,2-dihydroxy-3-keto-5-methylthiopentene (DHK-MTPene) depending upon the metal bound in the active site. Fe-containing acireductone dioxygenase (Fe-ARD) produces formate and 2-keto-4-methylthiobutyrate (KMTB), the alpha-ketoacid precursor of methionine in the methionine recycle pathway. Ni-containing acireductone dioxygenase (Ni-ARD) produces methylthiopropionate, carbon monoxide and formate, and does not lie on the methionine recycle pathway. This Physcomitrium patens (Spreading-leaved earth moss) protein is Acireductone dioxygenase 1.